We begin with the raw amino-acid sequence, 307 residues long: MAFSWQEQIKPAGTQDIQCDIEYLDKSYIHVYLDGVETTGYTWTSATNIRLNTALAASTTVLLIRKTEREYLYIEFASGSPFIEVNVDSQNTQFLHLAQELVEGRAIPGFYGTISMNGYRITDLANPINSQDAATKSYVDAADALLGQRIDVEAATRKAADDALSMRTSALENTFISGVETVSYPWSTVLAEATDEVTPGLAFTKAVVEINGVGQIRGYSFEIVDNTILFAKTLPAGTVVAARLGADVTAGDGFATQASVDYLADSLGDLAYLDTAEAVPDATGAGDVVAKLNALLASLRTSGVLAS.

It is found in the virion. Anchors indirectly the receptor binding (RBP) protein (depolymerase) to the virion. This chain is Anchor protein, found in Klebsiella phage KP34 (Bacteriophage KP34).